Reading from the N-terminus, the 839-residue chain is Probable alpha-glucuronidase A (839 aa).

Residues 1–18 form the signal peptide; it reads MRWSFLTVLLWLVSLTGA. Asparagine 49, asparagine 101, asparagine 148, asparagine 221, asparagine 278, asparagine 309, asparagine 342, asparagine 464, asparagine 526, asparagine 575, asparagine 681, and asparagine 731 each carry an N-linked (GlcNAc...) asparagine glycan.

The protein belongs to the glycosyl hydrolase 67 family.

It localises to the secreted. It catalyses the reaction an alpha-D-glucuronoside + H2O = D-glucuronate + an alcohol. Its function is as follows. Alpha-glucuronidase involved in the hydrolysis of xylan, a major structural heterogeneous polysaccharide found in plant biomass representing the second most abundant polysaccharide in the biosphere, after cellulose. Releases 4-O-methylglucuronic acid from xylan. In Aspergillus flavus (strain ATCC 200026 / FGSC A1120 / IAM 13836 / NRRL 3357 / JCM 12722 / SRRC 167), this protein is Probable alpha-glucuronidase A (aguA).